The sequence spans 103 residues: uncharacterized protein (103 aa).

The next 2 helical transmembrane spans lie at 42-62 and 65-85; these read PFPL…VLLA and TGTL…FICA.

It is found in the membrane. This is an uncharacterized protein from Saccharomyces cerevisiae (strain ATCC 204508 / S288c) (Baker's yeast).